The sequence spans 337 residues: tRNA N6-adenosine threonylcarbamoyltransferase (337 aa).

Positions 107 and 111 each coordinate Fe cation. Residues L129–G133, D162, G175, and N271 each bind substrate. D299 lines the Fe cation pocket.

Belongs to the KAE1 / TsaD family. The cofactor is Fe(2+).

The protein localises to the cytoplasm. The enzyme catalyses L-threonylcarbamoyladenylate + adenosine(37) in tRNA = N(6)-L-threonylcarbamoyladenosine(37) in tRNA + AMP + H(+). Required for the formation of a threonylcarbamoyl group on adenosine at position 37 (t(6)A37) in tRNAs that read codons beginning with adenine. Is involved in the transfer of the threonylcarbamoyl moiety of threonylcarbamoyl-AMP (TC-AMP) to the N6 group of A37, together with TsaE and TsaB. TsaD likely plays a direct catalytic role in this reaction. In Sulfurovum sp. (strain NBC37-1), this protein is tRNA N6-adenosine threonylcarbamoyltransferase.